We begin with the raw amino-acid sequence, 270 residues long: 4-hydroxy-tetrahydrodipicolinate reductase (270 aa).

Residues 9–14 (GAGGRM) and Glu-35 each bind NAD(+). Arg-36 provides a ligand contact to NADP(+). Residues 99-101 (GTT) and 123-126 (ASNY) contribute to the NAD(+) site. His-156 serves as the catalytic Proton donor/acceptor. A (S)-2,3,4,5-tetrahydrodipicolinate-binding site is contributed by His-157. Lys-160 serves as the catalytic Proton donor. 166–167 (GT) is a binding site for (S)-2,3,4,5-tetrahydrodipicolinate.

The protein belongs to the DapB family.

Its subcellular location is the cytoplasm. The catalysed reaction is (S)-2,3,4,5-tetrahydrodipicolinate + NAD(+) + H2O = (2S,4S)-4-hydroxy-2,3,4,5-tetrahydrodipicolinate + NADH + H(+). It catalyses the reaction (S)-2,3,4,5-tetrahydrodipicolinate + NADP(+) + H2O = (2S,4S)-4-hydroxy-2,3,4,5-tetrahydrodipicolinate + NADPH + H(+). Its pathway is amino-acid biosynthesis; L-lysine biosynthesis via DAP pathway; (S)-tetrahydrodipicolinate from L-aspartate: step 4/4. In terms of biological role, catalyzes the conversion of 4-hydroxy-tetrahydrodipicolinate (HTPA) to tetrahydrodipicolinate. The sequence is that of 4-hydroxy-tetrahydrodipicolinate reductase from Mannheimia succiniciproducens (strain KCTC 0769BP / MBEL55E).